We begin with the raw amino-acid sequence, 305 residues long: Acyl transferase (305 aa).

Residues Ser-116, Asp-213, and His-243 each act as charge relay system in the active site.

The protein belongs to the LuxD family.

Its pathway is lipid metabolism; fatty acid reduction for biolumincescence. In terms of biological role, acyl transferase is part of the fatty acid reductase system required for aldehyde biosynthesis; it produces fatty acids for the luminescent reaction. The chain is Acyl transferase from Shewanella woodyi (strain ATCC 51908 / MS32).